The sequence spans 59 residues: UPF0434 protein Pnec_0311 (59 aa).

Belongs to the UPF0434 family.

This Polynucleobacter necessarius subsp. necessarius (strain STIR1) protein is UPF0434 protein Pnec_0311.